A 308-amino-acid polypeptide reads, in one-letter code: UDP-3-O-acyl-N-acetylglucosamine deacetylase (308 aa).

3 residues coordinate Zn(2+): His77, His233, and Asp237. The Proton donor role is filled by His260.

Belongs to the LpxC family. Zn(2+) serves as cofactor.

The catalysed reaction is a UDP-3-O-[(3R)-3-hydroxyacyl]-N-acetyl-alpha-D-glucosamine + H2O = a UDP-3-O-[(3R)-3-hydroxyacyl]-alpha-D-glucosamine + acetate. The protein operates within glycolipid biosynthesis; lipid IV(A) biosynthesis; lipid IV(A) from (3R)-3-hydroxytetradecanoyl-[acyl-carrier-protein] and UDP-N-acetyl-alpha-D-glucosamine: step 2/6. In terms of biological role, catalyzes the hydrolysis of UDP-3-O-myristoyl-N-acetylglucosamine to form UDP-3-O-myristoylglucosamine and acetate, the committed step in lipid A biosynthesis. This chain is UDP-3-O-acyl-N-acetylglucosamine deacetylase, found in Nitratidesulfovibrio vulgaris (strain ATCC 29579 / DSM 644 / CCUG 34227 / NCIMB 8303 / VKM B-1760 / Hildenborough) (Desulfovibrio vulgaris).